A 161-amino-acid chain; its full sequence is Troponin C, slow skeletal and cardiac muscles (161 aa).

Met-1 carries the N-acetylmethionine modification. EF-hand domains follow at residues 16 to 51 (QKNE…LGQN), 52 to 87 (PTPE…CMKD), 92 to 127 (KSEE…TGET), and 128 to 161 (ITED…KGVE). Ca(2+)-binding residues include Asp-65, Asp-67, Ser-69, Thr-71, and Glu-76. Ser-98 bears the Phosphoserine mark. Ca(2+)-binding residues include Asp-105, Asn-107, Asp-109, Tyr-111, Glu-116, Asp-141, Asn-143, Asp-145, Arg-147, and Glu-152.

This sequence belongs to the troponin C family.

Its function is as follows. Troponin is the central regulatory protein of striated muscle contraction. Tn consists of three components: Tn-I which is the inhibitor of actomyosin ATPase, Tn-T which contains the binding site for tropomyosin and Tn-C. The binding of calcium to Tn-C abolishes the inhibitory action of Tn on actin filaments. This Homo sapiens (Human) protein is Troponin C, slow skeletal and cardiac muscles (TNNC1).